The sequence spans 551 residues: Putative transport protein NTHI0043 (551 aa).

Helical transmembrane passes span 4–24, 28–48, 65–85, 95–115, and 157–177; these read IAIT…IGHW, GVGL…HFTN, FGLI…FFSS, AFAI…HKIA, and VSYA…MWLI. RCK C-terminal domains lie at 191–275 and 277–360; these read RFNA…IIGY and VDAP…VIGN. Helical transmembrane passes span 370–390, 402–424, 438–458, 463–483, 492–512, and 529–549; these read MLPV…PFYI, AGGP…LYWF, IVLF…DTLV, LEWM…TGIL, YLTI…LAFA, and VYPL…VLLW.

This sequence belongs to the AAE transporter (TC 2.A.81) family. YidE subfamily.

The protein resides in the cell membrane. In Haemophilus influenzae (strain 86-028NP), this protein is Putative transport protein NTHI0043.